Consider the following 511-residue polypeptide: Maturase K (511 aa).

The protein belongs to the intron maturase 2 family. MatK subfamily.

It is found in the plastid. It localises to the chloroplast. Usually encoded in the trnK tRNA gene intron. Probably assists in splicing its own and other chloroplast group II introns. The polypeptide is Maturase K (Hordeum secalinum (Meadow barley)).